The chain runs to 703 residues: MEKPRGTEETPSSEPMEEEEDDDLELFGGYDSFRSYNSSAGSESSSYLEESSEAENEDREAGELPTSPLHLFSSANNRALDGSGSEPAVCEMCGIVGTREAFFSKTKRFCSVSCSRSYSSNSKKASILARLQGKPPTKKAKVLHKAAWSAKIGAFLHAQGTGQLADGTPTGQDALVLGFDWGKFLKDHSYKAAPVGCFKHVPLYDQWEDVMKGMKVEVLNSDAVLPSRVYWIATVIQAAGYRVLLRYEGFENDASHDFWCNLGTVDVHPIGWCAINSKILVPPRTIHAKFTDWKSYLMKRLVGSRTLPADFHIKMVESMKYPFRQGMRLEVVDKTQVSRTRMAVVDTVIGGRLRLLYEDGDSDDDFWCHMWSPLIHPVGWSRRVGHGIKMSERRCDMSHHPTFRKIYCDAVPYLFKKVRAVYTEGGWFEEGMKLEAIDPLNLGNICVATICKVLLDGYLMICVDGGPSTDGSDWFCYHASSHAIFPATFCQKNDIELTPPKGYETQPFDWESYLEKTKSKAAPARLFNMDCPNHGFKVGMKLEAVDLMEPRLICVATVKRVVHRLLSIHFDGWDNEYDQWVDCESPDIYPVGWCELTGYQLQPPVSAEPNTPQKGKDATKKKKKQFGKKRKRIPSAKTRPLRQSSKKPLLEDNLEALGVSEPVPDDIIAVCVKEEHQDLPSPDRSPSPLLPLPTESIKQERDS.

The segment at 1–70 (MEKPRGTEET…AGELPTSPLH (70 aa)) is disordered. The residue at position 13 (Ser-13) is a Phosphoserine. Positions 15–25 (PMEEEEDDDLE) are enriched in acidic residues. Residues 35–49 (SYNSSAGSESSSYLE) are compositionally biased toward low complexity. Positions 50–60 (ESSEAENEDRE) are enriched in acidic residues. At Ser-67 the chain carries Phosphoserine. Residues 81–116 (DGSGSEPAVCEMCGIVGTREAFFSKTKRFCSVSCSR) form an FCS-type zinc finger. Positions 90, 93, 110, and 114 each coordinate Zn(2+). MBT repeat units lie at residues 179-283 (FDWG…LVPP), 291-391 (TDWK…IKMS), 397-500 (MSHH…LTPP), and 508-604 (FDWE…LQPP). At Ser-338 the chain carries Phosphoserine. A Glycyl lysine isopeptide (Lys-Gly) (interchain with G-Cter in SUMO2) cross-link involves residue Lys-405. Disordered regions lie at residues 604 to 649 (PVSA…KKPL) and 672 to 703 (VKEEHQDLPSPDRSPSPLLPLPTESIKQERDS). Over residues 619–634 (TKKKKKQFGKKRKRIP) the composition is skewed to basic residues. Residues Lys-647 and Lys-673 each participate in a glycyl lysine isopeptide (Lys-Gly) (interchain with G-Cter in SUMO2) cross-link. Phosphoserine occurs at positions 681, 685, and 687. Lys-698 participates in a covalent cross-link: Glycyl lysine isopeptide (Lys-Gly) (interchain with G-Cter in SUMO1); alternate. Lys-698 participates in a covalent cross-link: Glycyl lysine isopeptide (Lys-Gly) (interchain with G-Cter in SUMO2); alternate.

In terms of assembly, part of the E2F6.com-1 complex in G0 phase composed of E2F6, MGA, MAX, TFDP1, CBX3, BAT8, EUHMTASE1, RING1, RNF2, MBLR, BAT8 and YAF2.

It localises to the nucleus. Putative Polycomb group (PcG) protein. PcG proteins maintain the transcriptionally repressive state of genes, probably via a modification of chromatin, rendering it heritably changed in its expressibility. Its association with a chromatin-remodeling complex suggests that it may contribute to prevent expression of genes that trigger the cell into mitosis. Binds to monomethylated and dimethylated 'Lys-20' on histone H4. Binds histone H3 peptides that are monomethylated or dimethylated on 'Lys-4', 'Lys-9' or 'Lys-27'. This is Lethal(3)malignant brain tumor-like protein 2 (L3mbtl2) from Rattus norvegicus (Rat).